A 61-amino-acid chain; its full sequence is Small ribosomal subunit protein uS14 (61 aa).

Positions 24, 27, 40, and 43 each coordinate Zn(2+).

This sequence belongs to the universal ribosomal protein uS14 family. Zinc-binding uS14 subfamily. Part of the 30S ribosomal subunit. Contacts proteins S3 and S10. It depends on Zn(2+) as a cofactor.

In terms of biological role, binds 16S rRNA, required for the assembly of 30S particles and may also be responsible for determining the conformation of the 16S rRNA at the A site. The sequence is that of Small ribosomal subunit protein uS14 from Thermus thermophilus (strain ATCC BAA-163 / DSM 7039 / HB27).